An 873-amino-acid chain; its full sequence is Paramyosin (873 aa).

Residues 1–25 are nonhelical region; it reads MSSRSSKYMYKSSGGAGDISIEYGT. A coiled-coil region spans residues 26–852; the sequence is DLGALTRLED…IRAKHRSWVT (827 aa). Residues 853-873 are nonhelical region; sequence TSQVPGGTRQVFVTEESSQNF.

The protein belongs to the paramyosin family. In terms of assembly, homodimer. Binds IgG and collagen. In terms of tissue distribution, expressed in all tissues except in saliva.

The protein resides in the cytoplasm. The protein localises to the myofibril. Its function is as follows. Paramyosin is a major structural component of many thick filaments isolated from invertebrate muscles. The protein is Paramyosin (PRM) of Rhipicephalus microplus (Cattle tick).